We begin with the raw amino-acid sequence, 199 residues long: Chromophore lyase CpcT/CpeT 2 (199 aa).

It belongs to the CpcT/CpeT biliprotein lyase family.

Its function is as follows. Covalently attaches a chromophore to Cys residue(s) of phycobiliproteins. This chain is Chromophore lyase CpcT/CpeT 2, found in Synechococcus sp. (strain JA-3-3Ab) (Cyanobacteria bacterium Yellowstone A-Prime).